Reading from the N-terminus, the 214-residue chain is Protein GrpE (214 aa).

The segment covering 1–13 (MKHTSEPTSQPDT) has biased composition (polar residues). The tract at residues 1–61 (MKHTSEPTSQ…AAVAEATIEP (61 aa)) is disordered. Residues 14 to 57 (QAAESAQSSAAAAGQAASAYSSQAQRASADAQAIAGDEAAVAEA) show a composition bias toward low complexity.

The protein belongs to the GrpE family. As to quaternary structure, homodimer.

It localises to the cytoplasm. Participates actively in the response to hyperosmotic and heat shock by preventing the aggregation of stress-denatured proteins, in association with DnaK and GrpE. It is the nucleotide exchange factor for DnaK and may function as a thermosensor. Unfolded proteins bind initially to DnaJ; upon interaction with the DnaJ-bound protein, DnaK hydrolyzes its bound ATP, resulting in the formation of a stable complex. GrpE releases ADP from DnaK; ATP binding to DnaK triggers the release of the substrate protein, thus completing the reaction cycle. Several rounds of ATP-dependent interactions between DnaJ, DnaK and GrpE are required for fully efficient folding. In Ralstonia nicotianae (strain ATCC BAA-1114 / GMI1000) (Ralstonia solanacearum), this protein is Protein GrpE.